We begin with the raw amino-acid sequence, 349 residues long: ATP phosphoribosyltransferase regulatory subunit (349 aa).

The segment at 325–349 (ANGRGRGVRPRRASARGGRAGTRPR) is disordered. Low complexity predominate over residues 339-349 (ARGGRAGTRPR).

Belongs to the class-II aminoacyl-tRNA synthetase family. HisZ subfamily. In terms of assembly, heteromultimer composed of HisG and HisZ subunits.

It is found in the cytoplasm. Its pathway is amino-acid biosynthesis; L-histidine biosynthesis; L-histidine from 5-phospho-alpha-D-ribose 1-diphosphate: step 1/9. Required for the first step of histidine biosynthesis. May allow the feedback regulation of ATP phosphoribosyltransferase activity by histidine. This chain is ATP phosphoribosyltransferase regulatory subunit, found in Anaeromyxobacter dehalogenans (strain 2CP-C).